We begin with the raw amino-acid sequence, 246 residues long: DNA repair protein RecO (246 aa).

Belongs to the RecO family.

Involved in DNA repair and RecF pathway recombination. This is DNA repair protein RecO from Pelobacter propionicus (strain DSM 2379 / NBRC 103807 / OttBd1).